The following is a 338-amino-acid chain: Ferredoxin--NADP reductase (338 aa).

FAD-binding residues include Asp38, Gln46, Tyr51, Val91, Phe125, Asp291, and Thr331.

Belongs to the ferredoxin--NADP reductase type 2 family. In terms of assembly, homodimer. FAD is required as a cofactor.

It carries out the reaction 2 reduced [2Fe-2S]-[ferredoxin] + NADP(+) + H(+) = 2 oxidized [2Fe-2S]-[ferredoxin] + NADPH. This is Ferredoxin--NADP reductase from Orientia tsutsugamushi (strain Ikeda) (Rickettsia tsutsugamushi).